The sequence spans 142 residues: Transcriptional regulator MraZ (142 aa).

2 consecutive SpoVT-AbrB domains span residues E5–S47 and A76–R119.

The protein belongs to the MraZ family. Forms oligomers.

The protein resides in the cytoplasm. It localises to the nucleoid. This is Transcriptional regulator MraZ from Deinococcus deserti (strain DSM 17065 / CIP 109153 / LMG 22923 / VCD115).